We begin with the raw amino-acid sequence, 241 residues long: ATP phosphoribosyltransferase (241 aa).

This sequence belongs to the ATP phosphoribosyltransferase family. Short subfamily. In terms of assembly, heteromultimer composed of HisG and HisZ subunits.

The protein resides in the cytoplasm. It carries out the reaction 1-(5-phospho-beta-D-ribosyl)-ATP + diphosphate = 5-phospho-alpha-D-ribose 1-diphosphate + ATP. It participates in amino-acid biosynthesis; L-histidine biosynthesis; L-histidine from 5-phospho-alpha-D-ribose 1-diphosphate: step 1/9. In terms of biological role, catalyzes the condensation of ATP and 5-phosphoribose 1-diphosphate to form N'-(5'-phosphoribosyl)-ATP (PR-ATP). Has a crucial role in the pathway because the rate of histidine biosynthesis seems to be controlled primarily by regulation of HisG enzymatic activity. In Gluconobacter oxydans (strain 621H) (Gluconobacter suboxydans), this protein is ATP phosphoribosyltransferase.